The chain runs to 296 residues: NAD kinase (296 aa).

D72 serves as the catalytic Proton acceptor. Residues 72 to 73 (DG), 146 to 147 (ND), R157, K174, D176, 187 to 192 (TAYALS), and Q247 each bind NAD(+).

This sequence belongs to the NAD kinase family. Requires a divalent metal cation as cofactor.

Its subcellular location is the cytoplasm. It carries out the reaction NAD(+) + ATP = ADP + NADP(+) + H(+). Functionally, involved in the regulation of the intracellular balance of NAD and NADP, and is a key enzyme in the biosynthesis of NADP. Catalyzes specifically the phosphorylation on 2'-hydroxyl of the adenosine moiety of NAD to yield NADP. The polypeptide is NAD kinase (Pseudomonas putida (strain GB-1)).